We begin with the raw amino-acid sequence, 556 residues long: Formate--tetrahydrofolate ligase (556 aa).

65–72 contributes to the ATP binding site; it reads TPAGEGKS.

This sequence belongs to the formate--tetrahydrofolate ligase family.

It carries out the reaction (6S)-5,6,7,8-tetrahydrofolate + formate + ATP = (6R)-10-formyltetrahydrofolate + ADP + phosphate. It participates in one-carbon metabolism; tetrahydrofolate interconversion. The polypeptide is Formate--tetrahydrofolate ligase (Streptococcus agalactiae serotype Ia (strain ATCC 27591 / A909 / CDC SS700)).